Consider the following 83-residue polypeptide: Acyl carrier protein MmaB (83 aa).

Residues 3–83 (DPVRQRILLA…LSQSELESPT (81 aa)) form the Carrier domain. The residue at position 39 (Ser39) is an O-(pantetheine 4'-phosphoryl)serine.

This sequence belongs to the acyl carrier protein (ACP) family. It depends on pantetheine 4'-phosphate as a cofactor.

It participates in lipid metabolism; fatty acid metabolism. Acyl-carrier protein (ACP) involved in the biosynthesis of a unique class of isonitrile lipopeptides (INLPs) that seem to play a role in metal acquisition in M.marinum. Is the dedicated ACP for the loading of activated acyl groups catalyzed by MmaC. In Mycobacterium marinum (strain ATCC BAA-535 / M), this protein is Acyl carrier protein MmaB.